Reading from the N-terminus, the 101-residue chain is Cell division protein FtsB (101 aa).

The Cytoplasmic segment spans residues 1–3 (MRI). The chain crosses the membrane as a helical span at residues 4 to 21 (VIYSMLVLLIAIQYPLWL). Over 22-101 (GKGGWLKVYE…KSSDTQVTKQ (80 aa)) the chain is Periplasmic. Residues 33-53 (ERQVELQEAKNSLLALRNAKL) are a coiled coil.

The protein belongs to the FtsB family. Part of a complex composed of FtsB, FtsL and FtsQ.

The protein resides in the cell inner membrane. Its function is as follows. Essential cell division protein. May link together the upstream cell division proteins, which are predominantly cytoplasmic, with the downstream cell division proteins, which are predominantly periplasmic. In Polynucleobacter necessarius subsp. necessarius (strain STIR1), this protein is Cell division protein FtsB.